We begin with the raw amino-acid sequence, 208 residues long: Rac-like GTP-binding protein ARAC8 (208 aa).

15-22 (GDGAVGKT) contributes to the GTP binding site. Positions 37 to 45 (YIPTVFDNF) match the Effector region motif. Residues 62–66 (DTAGQ) and 120–123 (TKMD) contribute to the GTP site. S-palmitoyl cysteine attachment occurs at residues Cys-199 and Cys-205.

Belongs to the small GTPase superfamily. Rho family. Interacts with ICR1. Binds to SPK1. Although this sequence has a C-terminal -CXXX, it is palmitoylated at Cys-205, rather than prenylated.

Its subcellular location is the membrane. Functionally, acts as a negative regulator of abscisic acid (ABA) responses. The protein is Rac-like GTP-binding protein ARAC8 (ARAC8) of Arabidopsis thaliana (Mouse-ear cress).